The primary structure comprises 699 residues: Catalase-peroxidase (699 aa).

The segment at residues 72–200 (WHSAGTYRIA…LAAVMMGLIY (129 aa)) is a cross-link (tryptophyl-tyrosyl-methioninium (Trp-Tyr) (with M-226)). H73 serves as the catalytic Proton acceptor. The segment at residues 200–226 (YVNPEGVDGNPDPLKTAKDMRVTFARM) is a cross-link (tryptophyl-tyrosyl-methioninium (Tyr-Met) (with W-72)). H241 serves as a coordination point for heme b.

This sequence belongs to the peroxidase family. Peroxidase/catalase subfamily. As to quaternary structure, homodimer or homotetramer. It depends on heme b as a cofactor. In terms of processing, formation of the three residue Trp-Tyr-Met cross-link is important for the catalase, but not the peroxidase activity of the enzyme.

It carries out the reaction H2O2 + AH2 = A + 2 H2O. It catalyses the reaction 2 H2O2 = O2 + 2 H2O. Its function is as follows. Bifunctional enzyme with both catalase and broad-spectrum peroxidase activity. This Aeromonas salmonicida (strain A449) protein is Catalase-peroxidase.